Reading from the N-terminus, the 90-residue chain is Molybdopterin synthase sulfur carrier subunit (90 aa).

1-thioglycine; alternate is present on Gly90. Position 90 is a glycyl adenylate; alternate (Gly90).

The protein belongs to the MoaD family. MOCS2A subfamily. In terms of assembly, heterotetramer; composed of 2 small (Mocs2A) and 2 large (Mocs2B) subunits. C-terminal thiocarboxylation occurs in 2 steps, it is first acyl-adenylated (-COAMP) via the hesA/moeB/thiF part of MOCS3, then thiocarboxylated (-COSH) via the rhodanese domain of MOCS3.

It is found in the cytoplasm. It functions in the pathway cofactor biosynthesis; molybdopterin biosynthesis. Acts as a sulfur carrier required for molybdopterin biosynthesis. Component of the molybdopterin synthase complex that catalyzes the conversion of precursor Z into molybdopterin by mediating the incorporation of 2 sulfur atoms into precursor Z to generate a dithiolene group. In the complex, serves as sulfur donor by being thiocarboxylated (-COSH) at its C-terminus by MOCS3. After interaction with Mocs2B, the sulfur is then transferred to precursor Z to form molybdopterin. This is Molybdopterin synthase sulfur carrier subunit from Drosophila simulans (Fruit fly).